The chain runs to 246 residues: Large ribosomal subunit protein uL2 (246 aa).

The disordered stretch occupies residues 197-227 (SPYAHPHGGGSHQKGGTPVPKTAPPGQKVGF).

The protein belongs to the universal ribosomal protein uL2 family. Part of the 50S ribosomal subunit. Forms a bridge to the 30S subunit in the 70S ribosome.

Its function is as follows. One of the primary rRNA binding proteins. Required for association of the 30S and 50S subunits to form the 70S ribosome, for tRNA binding and peptide bond formation. It has been suggested to have peptidyltransferase activity; this is somewhat controversial. Makes several contacts with the 16S rRNA in the 70S ribosome. The sequence is that of Large ribosomal subunit protein uL2 from Pyrobaculum aerophilum (strain ATCC 51768 / DSM 7523 / JCM 9630 / CIP 104966 / NBRC 100827 / IM2).